We begin with the raw amino-acid sequence, 698 residues long: Serotransferrin (698 aa).

The first 19 residues, 1–19 (MRLAVGALLVCAVLGLCLA), serve as a signal peptide directing secretion. 2 Transferrin-like domains span residues 25 to 347 (VRWC…NLRE) and 361 to 683 (VKWC…NLRK). 2 cysteine pairs are disulfide-bonded: Cys28–Cys67 and Cys38–Cys58. Residue Arg42 is modified to Dimethylated arginine. O-linked (GalNAc...) serine glycosylation occurs at Ser51. Fe(3+) is bound by residues Asp82 and Tyr114. 17 disulfide bridges follow: Cys137-Cys213, Cys156-Cys350, Cys177-Cys193, Cys180-Cys198, Cys190-Cys196, Cys246-Cys260, Cys358-Cys615, Cys364-Cys396, Cys374-Cys387, Cys421-Cys693, Cys437-Cys656, Cys469-Cys542, Cys493-Cys684, Cys503-Cys517, Cys514-Cys525, Cys582-Cys596, and Cys634-Cys639. The hydrogencarbonate site is built by Thr139, Arg143, Ala145, and Gly146. Residue Tyr207 participates in Fe(3+) binding. Residue His268 coordinates Fe(3+). The residue at position 389 (Ser389) is a Phosphoserine; by FAM20C. Asp411 is a binding site for Fe(3+). Asn432 is a glycosylation site (N-linked (GlcNAc...) (complex) asparagine). Tyr445 contacts Fe(3+). The hydrogencarbonate site is built by Thr471, Arg475, Ala477, and Gly478. Asn491 carries N-linked (GlcNAc...) asparagine; atypical; partial glycosylation. Tyr536 serves as a coordination point for Fe(3+). His604 lines the Fe(3+) pocket. Asn630 carries an N-linked (GlcNAc...) (complex) asparagine glycan. At Ser685 the chain carries Phosphoserine; by FAM20C.

This sequence belongs to the transferrin family. Monomer. Part of a complex composed of SLC40A1/ferroportin, TF/transferrin and HEPH/hephaestin that transfers iron from cells to transferrin. In terms of assembly, (Microbial infection) Binds to Neisseria transferrin-binding protein A (tbpA or tbp1). Forms a large complex with TbpA and TbpB. As to quaternary structure, (Microbial infection) Binds to Neisseria transferrin-binding protein B (tbpb or tbp2). As to expression, expressed by the liver and secreted in plasma.

The protein resides in the secreted. In terms of biological role, transferrins are iron binding transport proteins which can bind two Fe(3+) ions in association with the binding of an anion, usually bicarbonate. It is responsible for the transport of iron from sites of absorption and heme degradation to those of storage and utilization. Serum transferrin may also have a further role in stimulating cell proliferation. Its function is as follows. (Microbial infection) Serves as an iron source for Neisseria species, which capture the protein and extract its iron for their own use. Functionally, (Microbial infection) Serves as an iron source for parasite T.brucei (strain 427), which capture TF via its own transferrin receptor ESAG6:ESAG7 and extract its iron for its own use. The protein is Serotransferrin of Homo sapiens (Human).